The primary structure comprises 376 residues: Arabinogalactan endo-beta-1,4-galactanase (376 aa).

Positions 1 to 17 (MKKKILAATAILLAAIA) are cleaved as a signal peptide. The active-site Proton donor is glutamate 161. Catalysis depends on glutamate 270, which acts as the Nucleophile. Residues aspartate 281 and asparagine 285 each contribute to the Ca(2+) site.

It belongs to the glycosyl hydrolase 53 family. Ca(2+) serves as cofactor.

It catalyses the reaction The enzyme specifically hydrolyzes (1-&gt;4)-beta-D-galactosidic linkages in type I arabinogalactans.. The chain is Arabinogalactan endo-beta-1,4-galactanase (ganB) from Cellvibrio japonicus (strain Ueda107) (Pseudomonas fluorescens subsp. cellulosa).